A 198-amino-acid chain; its full sequence is MIEFVYPHTQLVAGVDEVGRGPLVGAVVTAAVILDPARPIVGLNDSKKLSEKRRLALYDEIKEKALSWSLGRAEPHEIDELNILHATMLAMQRAVAGLHIAPEYVLIDGNRCPALPVPSMAVVKGDSRVAEISAASIIAKVTRDAEMAALDGIFPQYGFAQHKGYPTAFHLAALAEHGATEHHRRSFAPVKRALGLAS.

An RNase H type-2 domain is found at 10-198 (QLVAGVDEVG…PVKRALGLAS (189 aa)). A divalent metal cation is bound by residues D16, E17, and D108.

This sequence belongs to the RNase HII family. The cofactor is Mn(2+). It depends on Mg(2+) as a cofactor.

Its subcellular location is the cytoplasm. It carries out the reaction Endonucleolytic cleavage to 5'-phosphomonoester.. Endonuclease that specifically degrades the RNA of RNA-DNA hybrids. This is Ribonuclease HII from Citrobacter koseri (strain ATCC BAA-895 / CDC 4225-83 / SGSC4696).